A 191-amino-acid chain; its full sequence is MYEHYHSGWIECVTGSMFSGKSEELIRRVRRGLFAKQKVIVFKPSIDDRYSELEVVSHNGNKVEAVNVHHSSEILEHVKEAHDIIAIDEVQFFDNDIVGVATQLAEEGYRVIVAGLDMDFRGVPFEPVPELMAVSEHVTKLQAVCSVCGAPSSRTQRLIDGVPAKFDDPIILVGAKESYEPRCREHHVVPK.

ATP contacts are provided by residues 15–22 and 88–91; these read GSMFSGKS and DEVQ. The active-site Proton acceptor is Glu89. Zn(2+)-binding residues include Cys145, Cys148, Cys183, and His186.

The protein belongs to the thymidine kinase family. In terms of assembly, homotetramer.

The protein resides in the cytoplasm. It catalyses the reaction thymidine + ATP = dTMP + ADP + H(+). In Macrococcus caseolyticus (strain JCSC5402) (Macrococcoides caseolyticum), this protein is Thymidine kinase.